Consider the following 594-residue polypeptide: Arginine--tRNA ligase (594 aa).

A 'HIGH' region motif is present at residues 139–149 (ANPTGPLHVGH).

It belongs to the class-I aminoacyl-tRNA synthetase family. Monomer.

The protein resides in the cytoplasm. The catalysed reaction is tRNA(Arg) + L-arginine + ATP = L-arginyl-tRNA(Arg) + AMP + diphosphate. The chain is Arginine--tRNA ligase from Burkholderia thailandensis (strain ATCC 700388 / DSM 13276 / CCUG 48851 / CIP 106301 / E264).